Consider the following 357-residue polypeptide: MAIQSDSLSSLPDSPRIVAPQPVSPNEESIERALRPKALEEYVGQQRAREQLEIFIAAARKRGEALDHVLLFGPPGLGKTTLAHIIAHEMGVQLRQTSGPVLERPGDLAALLTNLERNDVLFIDEIHRLSPVVEEILYPALEDFQIDILIGEGPAARSVKLDLQPFTLVGATTRAGMLTNPLRDRFGIVSRLEFYNTDELARIVTRSASLLNADITADGAHEVARRSRGTPRIANRLLRRVRDYAQVKSHGVIDQDAAGRALAMLDVDPQGLDVMDRKLLEAIVHKFDGGPVGVDSLAAAIGEERDTIEDVIEPYLIQHGYLQRTPRGRTATLTTWRHLGLTPPAAASGGTGELFSK.

Residues 1 to 15 are compositionally biased toward low complexity; sequence MAIQSDSLSSLPDSP. The interval 1–30 is disordered; sequence MAIQSDSLSSLPDSPRIVAPQPVSPNEESI. Residues 13 to 195 are large ATPase domain (RuvB-L); sequence DSPRIVAPQP…FGIVSRLEFY (183 aa). ATP contacts are provided by residues L34, R35, G76, K79, T80, T81, 142 to 144, R185, Y195, and R232; that span reads EDF. T80 lines the Mg(2+) pocket. The small ATPAse domain (RuvB-S) stretch occupies residues 196 to 266; that stretch reads NTDELARIVT…AAGRALAMLD (71 aa). Residues 269–357 form a head domain (RuvB-H) region; that stretch reads PQGLDVMDRK…SGGTGELFSK (89 aa). DNA-binding residues include R305, R324, and R329.

This sequence belongs to the RuvB family. In terms of assembly, homohexamer. Forms an RuvA(8)-RuvB(12)-Holliday junction (HJ) complex. HJ DNA is sandwiched between 2 RuvA tetramers; dsDNA enters through RuvA and exits via RuvB. An RuvB hexamer assembles on each DNA strand where it exits the tetramer. Each RuvB hexamer is contacted by two RuvA subunits (via domain III) on 2 adjacent RuvB subunits; this complex drives branch migration. In the full resolvosome a probable DNA-RuvA(4)-RuvB(12)-RuvC(2) complex forms which resolves the HJ.

The protein localises to the cytoplasm. The enzyme catalyses ATP + H2O = ADP + phosphate + H(+). Functionally, the RuvA-RuvB-RuvC complex processes Holliday junction (HJ) DNA during genetic recombination and DNA repair, while the RuvA-RuvB complex plays an important role in the rescue of blocked DNA replication forks via replication fork reversal (RFR). RuvA specifically binds to HJ cruciform DNA, conferring on it an open structure. The RuvB hexamer acts as an ATP-dependent pump, pulling dsDNA into and through the RuvAB complex. RuvB forms 2 homohexamers on either side of HJ DNA bound by 1 or 2 RuvA tetramers; 4 subunits per hexamer contact DNA at a time. Coordinated motions by a converter formed by DNA-disengaged RuvB subunits stimulates ATP hydrolysis and nucleotide exchange. Immobilization of the converter enables RuvB to convert the ATP-contained energy into a lever motion, pulling 2 nucleotides of DNA out of the RuvA tetramer per ATP hydrolyzed, thus driving DNA branch migration. The RuvB motors rotate together with the DNA substrate, which together with the progressing nucleotide cycle form the mechanistic basis for DNA recombination by continuous HJ branch migration. Branch migration allows RuvC to scan DNA until it finds its consensus sequence, where it cleaves and resolves cruciform DNA. This Bordetella pertussis (strain Tohama I / ATCC BAA-589 / NCTC 13251) protein is Holliday junction branch migration complex subunit RuvB.